The chain runs to 478 residues: NAD-dependent malic enzyme (478 aa).

An ACT domain is found at 12–86; that stretch reads TIRLQFEKDI…GVKIVNVSDR (75 aa). The active-site Proton donor is the tyrosine 114. The active-site Proton acceptor is the lysine 169. A divalent metal cation contacts are provided by glutamate 211, aspartate 212, and aspartate 237. Residues 270–273, asparagine 363, and asparagine 393 contribute to the NAD(+) site; that span reads IGAA.

Belongs to the malic enzymes family. Homotetramer. It depends on Mg(2+) as a cofactor. The cofactor is Mn(2+).

It catalyses the reaction (S)-malate + NAD(+) = pyruvate + CO2 + NADH. It carries out the reaction oxaloacetate + H(+) = pyruvate + CO2. Its activity is regulated as follows. The activity is enhanced 5-7 times by ammonium and potassium. In addition to the NAD-dependent oxidative decarboxylation of L-malate, the enzyme catalyzes the decarboxylation of oxaloacetate. The polypeptide is NAD-dependent malic enzyme (Geobacillus stearothermophilus (Bacillus stearothermophilus)).